Here is a 965-residue protein sequence, read N- to C-terminus: Argonaute protein wago-4 (965 aa).

The segment at 1 to 34 is disordered; the sequence is MPALPPVYTPSGAPSSVHAPPAVPPVPVPTQPLR. Residues 10 to 20 show a composition bias toward low complexity; sequence PSGAPSSVHAP. A compositionally biased stretch (pro residues) spans 21–30; sequence PAVPPVPVPT. The PAZ domain maps to 318–428; it reads PILDKLKEIT…YPMELLKISS (111 aa). Residues 594–924 enclose the Piwi domain; it reads TFVFIITDDS…YAKRGRNLWN (331 aa).

It belongs to the argonaute family. WAGO subfamily. As to quaternary structure, interacts with znfx-1; the interaction promotes the transmission of epigenetic information across generations. May interact with mina-1. Expressed in the hermaphrodite germline and in oocytes. Expressed at a low level in the male germline. Not expressed in the soma of hermaphrodites or males.

The protein resides in the cytoplasm. Its subcellular location is the perinuclear region. The protein localises to the cytoplasmic granule. Functionally, argonaute protein which is involved in the endogenous small interfering RNA (endo-siRNA) pathway and is required for RNA-mediated gene silencing (RNAi) in the germline. Interacts with secondary 22G-RNAs, which are RNA-dependent RNA polymerase-derived endo-siRNAs, typically 22 nucleotides in length with a 5'guanosine residue. Also interacts with the mRNA targets of 22G-RNAs. Associates with znfx-1 to mediate small RNA-directed transgenerational epigenetic inheritance of both germline- and soma-expressed genes. This chain is Argonaute protein wago-4, found in Caenorhabditis elegans.